We begin with the raw amino-acid sequence, 661 residues long: Tegument protein UL46 homolog (661 aa).

Residues 1 to 31 form a disordered region; the sequence is MFSRFARSFSSDDRTRKSYDGSYQSFNAGER. The span at 10–19 shows a compositional bias: basic and acidic residues; the sequence is SSDDRTRKSY. 2 helical membrane-spanning segments follow: residues 299-319 and 339-359; these read AGTG…TALL and AAIV…QYLI.

It belongs to the herpesviridae HHV-1 VP11/12 protein family. Phosphorylated by host LCK. The phosphorylation seems to be lymphocyte-specific.

It is found in the virion tegument. The protein localises to the host cytoplasm. Its subcellular location is the host membrane. Its function is as follows. Plays a role in the activation of the host PI3K/AKT pathway to promote cell survival. Interacts with and activates PI3KR1 in order to phosphorylate host AKT on its activating residues. Activates the host AP-1 pathway by triggering phosphorylation of host ERK1/2. Participates in host BIM and BAD phosphorylation, leading to apoptosis inhibition. This chain is Tegument protein UL46 homolog, found in Varicella-zoster virus (strain Oka vaccine) (HHV-3).